A 524-amino-acid polypeptide reads, in one-letter code: Cytochrome P450 CYP749A22 (524 aa).

Residues 12 to 32 (TPILFQFLLSSLCVFLLFVFI) traverse the membrane as a helical segment. Cysteine 472 contacts heme.

It belongs to the cytochrome P450 family. It depends on heme as a cofactor.

It is found in the membrane. In terms of biological role, probable heme-thiolate monooxygenase. The sequence is that of Cytochrome P450 CYP749A22 from Panax ginseng (Korean ginseng).